The chain runs to 263 residues: Endonuclease 8 (263 aa).

Catalysis depends on P2, which acts as the Schiff-base intermediate with DNA. E3 (proton donor) is an active-site residue. K53 (proton donor; for beta-elimination activity) is an active-site residue. DNA is bound by residues Q70, R125, and N169. The FPG-type zinc-finger motif lies at 229 to 263 (KVFHRDGERCERCGGIIEKTTLSSRPFYWCPGCQH). R253 acts as the Proton donor; for delta-elimination activity in catalysis.

This sequence belongs to the FPG family. Zn(2+) serves as cofactor.

The catalysed reaction is 2'-deoxyribonucleotide-(2'-deoxyribose 5'-phosphate)-2'-deoxyribonucleotide-DNA = a 3'-end 2'-deoxyribonucleotide-(2,3-dehydro-2,3-deoxyribose 5'-phosphate)-DNA + a 5'-end 5'-phospho-2'-deoxyribonucleoside-DNA + H(+). Functionally, involved in base excision repair of DNA damaged by oxidation or by mutagenic agents. Acts as a DNA glycosylase that recognizes and removes damaged bases. Has a preference for oxidized pyrimidines, such as thymine glycol, 5,6-dihydrouracil and 5,6-dihydrothymine. Has AP (apurinic/apyrimidinic) lyase activity and introduces nicks in the DNA strand. Cleaves the DNA backbone by beta-delta elimination to generate a single-strand break at the site of the removed base with both 3'- and 5'-phosphates. This Klebsiella pneumoniae subsp. pneumoniae (strain ATCC 700721 / MGH 78578) protein is Endonuclease 8.